The following is a 109-amino-acid chain: Mitochondrial pyruvate carrier 1 (109 aa).

Alanine 2 is modified (N-acetylalanine). The Mitochondrial matrix portion of the chain corresponds to alanine 2–aspartate 20. A helical membrane pass occupies residues tyrosine 21 to isoleucine 41. At asparagine 42 to serine 52 the chain is on the mitochondrial intermembrane side. Residues glycine 53–tyrosine 71 form a helical membrane-spanning segment. Position 72 is an N6-acetyllysine (lysine 72). The Mitochondrial matrix segment spans residues lysine 72–alanine 109.

Belongs to the mitochondrial pyruvate carrier (MPC) (TC 2.A.105) family. Homodimer. Forms heterodimer with MPC2. The heterodimer is the more stable and dominant form.

Its subcellular location is the mitochondrion inner membrane. The catalysed reaction is pyruvate(out) + H(+)(out) = pyruvate(in) + H(+)(in). In terms of biological role, mediates the uptake of pyruvate into mitochondria. This chain is Mitochondrial pyruvate carrier 1 (Mpc1), found in Mus musculus (Mouse).